A 202-amino-acid chain; its full sequence is Pyridoxal 5'-phosphate synthase subunit PdxT (202 aa).

L-glutamine is bound at residue 48-50; that stretch reads GES. Cys-80 (nucleophile) is an active-site residue. L-glutamine contacts are provided by residues Arg-112 and 139-140; that span reads IR. Active-site charge relay system residues include His-180 and Glu-182.

Belongs to the glutaminase PdxT/SNO family. In terms of assembly, in the presence of PdxS, forms a dodecamer of heterodimers. Only shows activity in the heterodimer.

The enzyme catalyses aldehydo-D-ribose 5-phosphate + D-glyceraldehyde 3-phosphate + L-glutamine = pyridoxal 5'-phosphate + L-glutamate + phosphate + 3 H2O + H(+). It catalyses the reaction L-glutamine + H2O = L-glutamate + NH4(+). The protein operates within cofactor biosynthesis; pyridoxal 5'-phosphate biosynthesis. In terms of biological role, catalyzes the hydrolysis of glutamine to glutamate and ammonia as part of the biosynthesis of pyridoxal 5'-phosphate. The resulting ammonia molecule is channeled to the active site of PdxS. The protein is Pyridoxal 5'-phosphate synthase subunit PdxT of Hyperthermus butylicus (strain DSM 5456 / JCM 9403 / PLM1-5).